Here is a 276-residue protein sequence, read N- to C-terminus: NADH-cytochrome b5 reductase 2 (276 aa).

The FAD-binding FR-type domain occupies 15 to 127 (EAKYPLPLIE…RGPRGRLFYH (113 aa)). Lys-17 carries the post-translational modification N6-acetyllysine. At Tyr-18 the chain carries Phosphotyrosine. FAD-binding positions include 107 to 137 (ENMKIGETIFFRGPRGRLFYHGPGNLGIRPD) and 146 to 181 (LADHLGMIAGGTGITPMLQLIRHITKDPSDRTRMSL).

Belongs to the flavoprotein pyridine nucleotide cytochrome reductase family. FAD serves as cofactor. In terms of tissue distribution, restricted expression.

The catalysed reaction is 2 Fe(III)-[cytochrome b5] + NADH = 2 Fe(II)-[cytochrome b5] + NAD(+) + H(+). In terms of biological role, NADH-cytochrome b5 reductases are involved in desaturation and elongation of fatty acids, cholesterol biosynthesis, drug metabolism, and, in erythrocyte, methemoglobin reduction. Responsible for NADH-dependent lucigenin chemiluminescence in spermatozoa by reducing both lucigenin and 2-[4-iodophenyl]-3-[4-nitrophenyl]-5-[2,4-disulfophenyl]-2H tetrazolium monosodium salt (WST-1). The polypeptide is NADH-cytochrome b5 reductase 2 (Homo sapiens (Human)).